The sequence spans 365 residues: tRNA 2-selenouridine synthase (365 aa).

In terms of domain architecture, Rhodanese spans 15–138 (FVNDHPIMDA…MRQFLIETID (124 aa)). Cys98 (S-selanylcysteine intermediate) is an active-site residue.

The protein belongs to the SelU family. As to quaternary structure, monomer.

The catalysed reaction is 5-methylaminomethyl-2-thiouridine(34) in tRNA + selenophosphate + (2E)-geranyl diphosphate + H2O + H(+) = 5-methylaminomethyl-2-selenouridine(34) in tRNA + (2E)-thiogeraniol + phosphate + diphosphate. The enzyme catalyses 5-methylaminomethyl-2-thiouridine(34) in tRNA + (2E)-geranyl diphosphate = 5-methylaminomethyl-S-(2E)-geranyl-thiouridine(34) in tRNA + diphosphate. It carries out the reaction 5-methylaminomethyl-S-(2E)-geranyl-thiouridine(34) in tRNA + selenophosphate + H(+) = 5-methylaminomethyl-2-(Se-phospho)selenouridine(34) in tRNA + (2E)-thiogeraniol. It catalyses the reaction 5-methylaminomethyl-2-(Se-phospho)selenouridine(34) in tRNA + H2O = 5-methylaminomethyl-2-selenouridine(34) in tRNA + phosphate. Involved in the post-transcriptional modification of the uridine at the wobble position (U34) of tRNA(Lys), tRNA(Glu) and tRNA(Gln). Catalyzes the conversion of 2-thiouridine (S2U-RNA) to 2-selenouridine (Se2U-RNA). Acts in a two-step process involving geranylation of 2-thiouridine (S2U) to S-geranyl-2-thiouridine (geS2U) and subsequent selenation of the latter derivative to 2-selenouridine (Se2U) in the tRNA chain. The polypeptide is tRNA 2-selenouridine synthase (Shewanella halifaxensis (strain HAW-EB4)).